Reading from the N-terminus, the 270-residue chain is MANISAADVKKLRELTGAGMMDCKKALEEADGDFEKAAELIRIKLGKKMAERGAEREASNGLVATSGGALVELNCETDFVAKGDDFVAAAQQIADAADEAKAGDVEALKAVRLGDKTVGEVVENLAITIGEKIELGRVAYFDGPVVAYMHKRAADLPPAVGVLVEYDGAEAGARGAAMQIAAMRPQYLTREEVPGDRVAKEREIAEATSREEGKPEQAIAKITEGRLNGFFKDVVLLEQPSVTESKKSVKAVLDEAGTTVKRFARFEVGA.

The involved in Mg(2+) ion dislocation from EF-Tu stretch occupies residues 77-80 (TDFV).

This sequence belongs to the EF-Ts family.

It localises to the cytoplasm. Functionally, associates with the EF-Tu.GDP complex and induces the exchange of GDP to GTP. It remains bound to the aminoacyl-tRNA.EF-Tu.GTP complex up to the GTP hydrolysis stage on the ribosome. In Nocardioides sp. (strain ATCC BAA-499 / JS614), this protein is Elongation factor Ts.